The sequence spans 158 residues: Anaerobic nitrite reductase AHB2 (158 aa).

The Globin domain occupies glycine 5–lysine 154. The short motif at glutamate 38–alanine 42 is the Homodimerization element. Heme b is bound by residues serine 48, lysine 62, histidine 66, and histidine 101. Positions aspartate 108–arginine 120 match the Homodimerization motif.

Belongs to the plant globin family. As to quaternary structure, unable to dimerize. Heme b is required as a cofactor. Expressed in rosette leaves but not in roots.

It localises to the cytoplasm. The protein localises to the nucleus. It carries out the reaction Fe(III)-heme b-[protein] + nitric oxide + H2O = Fe(II)-heme b-[protein] + nitrite + 2 H(+). Its function is as follows. Phytoglobin that reduces nitrite to nitric oxide (NO) under anoxic conditions (e.g. during flooding or in waterlogged soil). May not function as an oxygen storage or transport protein. Has an unusually high affinity for O(2) through an hexacoordinate heme iron because of a very low dissociation constant. This is Anaerobic nitrite reductase AHB2 from Arabidopsis thaliana (Mouse-ear cress).